A 341-amino-acid chain; its full sequence is Elongation factor Ts (341 aa).

An involved in Mg(2+) ion dislocation from EF-Tu region spans residues 80–83 (TDFV).

This sequence belongs to the EF-Ts family.

Its subcellular location is the cytoplasm. In terms of biological role, associates with the EF-Tu.GDP complex and induces the exchange of GDP to GTP. It remains bound to the aminoacyl-tRNA.EF-Tu.GTP complex up to the GTP hydrolysis stage on the ribosome. This chain is Elongation factor Ts, found in Lactobacillus gasseri (strain ATCC 33323 / DSM 20243 / BCRC 14619 / CIP 102991 / JCM 1131 / KCTC 3163 / NCIMB 11718 / NCTC 13722 / AM63).